The following is a 487-amino-acid chain: MAMMRTSPRDSISNLPDEILGKILSLLPTKVAASTSVLSKRWRNLLGLVDNLCFDESMVVYPNEEEETSGSLRFCDFVDKTFALLSNSHIKKFSLSRVYKYNDDVDGMVRRWIRTVMERGLLEIHLHATPMSFVAIETKLLTSNTLVKLTLSARCFVEVERVFFPALKSLSLFSILGDYTNYIRLIDGCPVLEELYMRDGDYPFLRLTCGTNVESASLKRLVIFTHNPNEMIWHELIYFEAPSLVYLDYSSYVSAKYDVVDFDLLVEARLSLRLWVSTNDYDYSDDDDDDDDDDDDDDDGDYYIVEPKAPIFGDVTELLAAIRNITTLHLSPDSLEVFHFCCKSMPVFNNLLNLSIESNKDKGWQVMPLLLKSCPNLHTLVIKGLVHRVTSRCGDACACIPKKQRKIVQKEEALCCLRTCQVKVLQISEYGGYFQELKQMRHFLGKLECLETVKVGVHAENNNNSEFLRANVLTLPRVSAKCNVHFI.

Residues 9-57 form the F-box domain; that stretch reads RDSISNLPDEILGKILSLLPTKVAASTSVLSKRWRNLLGLVDNLCFDES. 6 LRR repeats span residues 71–97, 125–153, 174–199, 225–251, 327–358, and 359–384; these read SLRFCDFVDKTFALLSNSHIKKFSLSR, HLHATPMSFVAIETKLLTSNTLVKLTLSA, SILGDYTNYIRLIDGCPVLEELYMRD, THNPNEMIWHELIYFEAPSLVYLDYSS, TLHLSPDSLEVFHFCCKSMPVFNNLLNLSIES, and NKDKGWQVMPLLLKSCPNLHTLVIKG.

The sequence is that of F-box/LRR-repeat protein At1g48400 from Arabidopsis thaliana (Mouse-ear cress).